The chain runs to 129 residues: Cortical cell-delineating protein (129 aa).

Positions 1-19 (MAPKVALFLALSLLFAATA) form a signal peptide, or 21. Residue asparagine 25 is glycosylated (N-linked (GlcNAc...) asparagine). Tandem repeats lie at residues 29–34 (PVVPTP) and 35–40 (PVVPTP). The tract at residues 29-40 (PVVPTPPVVPTP) is 2 X 6 AA tandem repeats of P-V-V-P-T-P.

The protein to carrot DC2.15 and PEMB3. In terms of tissue distribution, cortical ground meristem of developing roots.

Delineates a novel subset of developing cortical cells. It is probably involved in some aspect of transport of molecules to or from the vasculature. In Zea mays (Maize), this protein is Cortical cell-delineating protein.